Consider the following 301-residue polypeptide: uncharacterized protein (301 aa).

A signal peptide spans M1 to A28.

This is an uncharacterized protein from Treponema pallidum (strain Nichols).